The primary structure comprises 158 residues: Large ribosomal subunit protein uL16 (158 aa).

This sequence belongs to the universal ribosomal protein uL16 family. As to quaternary structure, part of the 50S ribosomal subunit.

Its function is as follows. Binds 23S rRNA and is also seen to make contacts with the A and possibly P site tRNAs. The sequence is that of Large ribosomal subunit protein uL16 from Synechococcus sp. (strain CC9605).